Reading from the N-terminus, the 328-residue chain is DNA-directed RNA polymerase subunit alpha (328 aa).

Residues 1–231 (MIYQMQMPTK…DHITFFANFS (231 aa)) form an alpha N-terminal domain (alpha-NTD) region. The tract at residues 247 to 328 (DEFESMRKLL…MDITRYQLKG (82 aa)) is alpha C-terminal domain (alpha-CTD).

The protein belongs to the RNA polymerase alpha chain family. As to quaternary structure, homodimer. The RNAP catalytic core consists of 2 alpha, 1 beta, 1 beta' and 1 omega subunit. When a sigma factor is associated with the core the holoenzyme is formed, which can initiate transcription.

The catalysed reaction is RNA(n) + a ribonucleoside 5'-triphosphate = RNA(n+1) + diphosphate. In terms of biological role, DNA-dependent RNA polymerase catalyzes the transcription of DNA into RNA using the four ribonucleoside triphosphates as substrates. The protein is DNA-directed RNA polymerase subunit alpha of Chlorobaculum tepidum (strain ATCC 49652 / DSM 12025 / NBRC 103806 / TLS) (Chlorobium tepidum).